Here is a 315-residue protein sequence, read N- to C-terminus: Methionyl-tRNA formyltransferase (315 aa).

Positions 2–189 are N-terminal domain; sequence SESLRIIFAG…LITTLKQLAD (188 aa). Residue 113-116 coordinates (6S)-5,6,7,8-tetrahydrofolate; that stretch reads SLLP. Positions 210-315 are C-terminal domain; sequence KEEARIDWSL…EWFVPGNRLV (106 aa).

Belongs to the Fmt family. As to quaternary structure, monomer.

The enzyme catalyses L-methionyl-tRNA(fMet) + (6R)-10-formyltetrahydrofolate = N-formyl-L-methionyl-tRNA(fMet) + (6S)-5,6,7,8-tetrahydrofolate + H(+). With respect to regulation, activity is optimum in the presence of Mg(2+) and K(+). Its function is as follows. Attaches a formyl group to the free amino group of methionyl-tRNA(fMet). The formyl group appears to play a dual role in the initiator identity of N-formylmethionyl-tRNA by promoting its recognition by IF2 and preventing the misappropriation of this tRNA by the elongation apparatus. The sequence is that of Methionyl-tRNA formyltransferase from Escherichia coli (strain K12).